An 88-amino-acid chain; its full sequence is Small ribosomal subunit protein bS20 (88 aa).

This sequence belongs to the bacterial ribosomal protein bS20 family.

Binds directly to 16S ribosomal RNA. In Bradyrhizobium sp. (strain BTAi1 / ATCC BAA-1182), this protein is Small ribosomal subunit protein bS20.